The chain runs to 135 residues: Large ribosomal subunit protein uL16c (135 aa).

It belongs to the universal ribosomal protein uL16 family. As to quaternary structure, part of the 50S ribosomal subunit.

Its subcellular location is the plastid. The protein resides in the chloroplast. The protein is Large ribosomal subunit protein uL16c of Gossypium barbadense (Sea Island cotton).